The primary structure comprises 119 residues: Large ribosomal subunit protein bL19 (119 aa).

Belongs to the bacterial ribosomal protein bL19 family.

Its function is as follows. This protein is located at the 30S-50S ribosomal subunit interface and may play a role in the structure and function of the aminoacyl-tRNA binding site. This is Large ribosomal subunit protein bL19 from Borreliella afzelii (strain PKo) (Borrelia afzelii).